The chain runs to 341 residues: Protein-glutamate methylesterase/protein-glutamine glutaminase 2 (341 aa).

Residues 7 to 120 form the Response regulatory domain; it reads KTLIVDDSLL…NRDLDSFFSE (114 aa). Asp58 carries the post-translational modification 4-aspartylphosphate. In terms of domain architecture, CheB-type methylesterase spans 155-341; the sequence is VIAIGASTGG…QALYKLINQL (187 aa). Catalysis depends on residues Ser161, His187, and Asp283.

Belongs to the CheB family. In terms of processing, phosphorylated by CheA. Phosphorylation of the N-terminal regulatory domain activates the methylesterase activity.

It localises to the cytoplasm. It catalyses the reaction [protein]-L-glutamate 5-O-methyl ester + H2O = L-glutamyl-[protein] + methanol + H(+). It carries out the reaction L-glutaminyl-[protein] + H2O = L-glutamyl-[protein] + NH4(+). Functionally, involved in chemotaxis. Part of a chemotaxis signal transduction system that modulates chemotaxis in response to various stimuli. Catalyzes the demethylation of specific methylglutamate residues introduced into the chemoreceptors (methyl-accepting chemotaxis proteins or MCP) by CheR. Also mediates the irreversible deamidation of specific glutamine residues to glutamic acid. The chain is Protein-glutamate methylesterase/protein-glutamine glutaminase 2 from Syntrophomonas wolfei subsp. wolfei (strain DSM 2245B / Goettingen).